The primary structure comprises 184 residues: Inosine triphosphate pyrophosphatase (184 aa).

9 to 14 contributes to the ITP binding site; that stretch reads TSNASK. Residue E38 participates in Mg(2+) binding. ITP contacts are provided by residues K50, 66–67, K83, 142–145, K163, and 168–169; these read DT, FGWD, and HR.

The protein belongs to the HAM1 NTPase family. As to quaternary structure, homodimer. Requires Mg(2+) as cofactor. Mn(2+) serves as cofactor.

It localises to the cytoplasm. The protein resides in the nucleus. It carries out the reaction ITP + H2O = IMP + diphosphate + H(+). The enzyme catalyses dITP + H2O = dIMP + diphosphate + H(+). The catalysed reaction is XTP + H2O = XMP + diphosphate + H(+). Functionally, pyrophosphatase that hydrolyzes non-canonical purine nucleotides such as inosine triphosphate (ITP), deoxyinosine triphosphate (dITP) or xanthosine 5'-triphosphate (XTP) to their respective monophosphate derivatives. The enzyme does not distinguish between the deoxy- and ribose forms. Probably excludes non-canonical purines from RNA and DNA precursor pools, thus preventing their incorporation into RNA and DNA and avoiding chromosomal lesions. The sequence is that of Inosine triphosphate pyrophosphatase from Tuber melanosporum (strain Mel28) (Perigord black truffle).